Consider the following 374-residue polypeptide: Bifunctional enzyme IspD/IspF (374 aa).

The 2-C-methyl-D-erythritol 4-phosphate cytidylyltransferase stretch occupies residues 1-213 (MLDVTLIVLC…PCLKAPSNNF (213 aa)). The tract at residues 214–374 (FTGTGFDIHA…TLKYYNWKKR (161 aa)) is 2-C-methyl-D-erythritol 2,4-cyclodiphosphate synthase. Residues D220 and H222 each contribute to the a divalent metal cation site. 4-CDP-2-C-methyl-D-erythritol 2-phosphate-binding positions include 220–222 (DIH) and 246–247 (HS). An a divalent metal cation-binding site is contributed by H254. Residues 268–270 (DIG), 273–277 (FPDTD), 344–347 (TTAE), F351, and R354 each bind 4-CDP-2-C-methyl-D-erythritol 2-phosphate.

The protein in the N-terminal section; belongs to the IspD/TarI cytidylyltransferase family. IspD subfamily. It in the C-terminal section; belongs to the IspF family. It depends on a divalent metal cation as a cofactor.

The catalysed reaction is 2-C-methyl-D-erythritol 4-phosphate + CTP + H(+) = 4-CDP-2-C-methyl-D-erythritol + diphosphate. It catalyses the reaction 4-CDP-2-C-methyl-D-erythritol 2-phosphate = 2-C-methyl-D-erythritol 2,4-cyclic diphosphate + CMP. It participates in isoprenoid biosynthesis; isopentenyl diphosphate biosynthesis via DXP pathway; isopentenyl diphosphate from 1-deoxy-D-xylulose 5-phosphate: step 2/6. Its pathway is isoprenoid biosynthesis; isopentenyl diphosphate biosynthesis via DXP pathway; isopentenyl diphosphate from 1-deoxy-D-xylulose 5-phosphate: step 4/6. Its function is as follows. Bifunctional enzyme that catalyzes the formation of 4-diphosphocytidyl-2-C-methyl-D-erythritol from CTP and 2-C-methyl-D-erythritol 4-phosphate (MEP) (IspD), and catalyzes the conversion of 4-diphosphocytidyl-2-C-methyl-D-erythritol 2-phosphate (CDP-ME2P) to 2-C-methyl-D-erythritol 2,4-cyclodiphosphate (ME-CPP) with a corresponding release of cytidine 5-monophosphate (CMP) (IspF). The sequence is that of Bifunctional enzyme IspD/IspF from Aliarcobacter butzleri (strain RM4018) (Arcobacter butzleri).